A 462-amino-acid chain; its full sequence is U2 small nuclear ribonucleoprotein auxiliary factor 35 kDa subunit-related protein 2 (462 aa).

The segment covering Met-1–Gly-13 has biased composition (low complexity). Disordered regions lie at residues Met-1–Tyr-22, Ala-44–Arg-66, and Trp-115–Glu-138. Residue Lys-49 forms a Glycyl lysine isopeptide (Lys-Gly) (interchain with G-Cter in SUMO2) linkage. A compositionally biased stretch (basic and acidic residues) spans Ala-57–Arg-66. The C3H1-type 1 zinc-finger motif lies at Glu-170 to Pro-198. An RRM domain is found at Pro-202–Val-308. Residues Arg-310–Arg-337 form a C3H1-type 2 zinc finger. Phosphoserine is present on Ser-353. Positions Pro-354–Pro-462 are disordered. Over residues Asn-364 to Gly-379 the composition is skewed to basic and acidic residues. Ser-389 carries the post-translational modification Phosphoserine. The span at Phe-392–Ser-403 shows a compositional bias: basic and acidic residues. Residues Ser-404–Met-417 show a composition bias toward basic residues.

In terms of assembly, component of the U11/U12 snRNPs that are part of the U12-type spliceosome. Interacts (via RS domain) with SRSF1 and SRSF2. Interacts with U2AF2/U2AF65. In terms of processing, phosphorylated in the RS domain by SRPK1.

It localises to the nucleus. Pre-mRNA-binding protein required for splicing of both U2- and U12-type introns. Selectively interacts with the 3'-splice site of U2- and U12-type pre-mRNAs and promotes different steps in U2 and U12 intron splicing. Recruited to U12 pre-mRNAs in an ATP-dependent manner and is required for assembly of the prespliceosome, a precursor to other spliceosomal complexes. For U2-type introns, it is selectively and specifically required for the second step of splicing. The polypeptide is U2 small nuclear ribonucleoprotein auxiliary factor 35 kDa subunit-related protein 2 (Zrsr2) (Mus musculus (Mouse)).